Consider the following 500-residue polypeptide: Cytochrome P450 monooxygenase 103 (500 aa).

2 consecutive transmembrane segments (helical) span residues 1–21 (MAST…YLLR) and 26–46 (PLYA…IGAL). Asn374 carries an N-linked (GlcNAc...) asparagine glycan. Residue Cys441 participates in heme binding.

This sequence belongs to the cytochrome P450 family. Requires heme as cofactor.

Its subcellular location is the membrane. Its pathway is secondary metabolite biosynthesis. Cytochrome P450 monooxygenase that is able to use testosterone as a substrate for oxidation. This is Cytochrome P450 monooxygenase 103 from Postia placenta (strain ATCC 44394 / Madison 698-R) (Brown rot fungus).